The primary structure comprises 192 residues: Soluble inorganic pyrophosphatase 2 (192 aa).

Substrate is bound by residues K38, R52, and Y64. Residues D74, D79, and D111 each coordinate Mg(2+). A substrate-binding site is contributed by Y148.

In terms of assembly, monomer. The cofactor is Mg(2+). In terms of processing, the N-terminus is blocked.

It is found in the mitochondrion. The catalysed reaction is diphosphate + H2O = 2 phosphate + H(+). The sequence is that of Soluble inorganic pyrophosphatase 2 (ppa2) from Chlamydomonas reinhardtii (Chlamydomonas smithii).